Consider the following 326-residue polypeptide: Protoheme IX farnesyltransferase (326 aa).

8 consecutive transmembrane segments (helical) span residues 35-55, 60-80, 106-126, 129-149, 157-177, 185-205, 242-262, and 283-303; these read LIPL…GWPL, LVCT…LNCL, SAFI…VSGV, LAAG…TALL, IVIG…AATG, WLFA…ALLL, GFGV…LLPF, and AKGL…LLIL.

This sequence belongs to the UbiA prenyltransferase family. Protoheme IX farnesyltransferase subfamily.

The protein resides in the cell inner membrane. The enzyme catalyses heme b + (2E,6E)-farnesyl diphosphate + H2O = Fe(II)-heme o + diphosphate. It participates in porphyrin-containing compound metabolism; heme O biosynthesis; heme O from protoheme: step 1/1. Converts heme B (protoheme IX) to heme O by substitution of the vinyl group on carbon 2 of heme B porphyrin ring with a hydroxyethyl farnesyl side group. This is Protoheme IX farnesyltransferase from Parasynechococcus marenigrum (strain WH8102).